The chain runs to 124 residues: Small ribosomal subunit protein uS12 (124 aa).

A disordered region spans residues 1 to 22 (MATVNQLVRKPRQKPDAKSNVA). Residue D89 is modified to 3-methylthioaspartic acid.

This sequence belongs to the universal ribosomal protein uS12 family. As to quaternary structure, part of the 30S ribosomal subunit. Contacts proteins S8 and S17. May interact with IF1 in the 30S initiation complex.

In terms of biological role, with S4 and S5 plays an important role in translational accuracy. Interacts with and stabilizes bases of the 16S rRNA that are involved in tRNA selection in the A site and with the mRNA backbone. Located at the interface of the 30S and 50S subunits, it traverses the body of the 30S subunit contacting proteins on the other side and probably holding the rRNA structure together. The combined cluster of proteins S8, S12 and S17 appears to hold together the shoulder and platform of the 30S subunit. The sequence is that of Small ribosomal subunit protein uS12 from Pseudoalteromonas atlantica (strain T6c / ATCC BAA-1087).